A 168-amino-acid polypeptide reads, in one-letter code: Cofilin-1-A (168 aa).

The residue at position 2 (alanine 2) is an N-acetylalanine. An ADF-H domain is found at 4–153 (GVMVSDDVIK…NDPCNLADKL (150 aa)). The Nuclear localization signal motif lies at 30–34 (KKRKK).

The protein belongs to the actin-binding proteins ADF family. In terms of processing, inactive when phosphorylated. Phosphorylation levels vary during development. Oocytes contain only the phosphorylated form, and 80-95% of cfl1 protein is phosphorylated in unfertilized eggs. Rapid dephosphorylation occurs within 30 minutes after fertilization. Phosphorylation levels increase again between the morula and blastula stages (5-8 hpf) and then decrease again as gastrulation approaches. Dephosphorylated by pdxp. Expressed diffusely in both animal and vegetal hemispheres of the oocyte. During cleavage, expression accumulates around the cleavage furrow, along the vegetal membrane, and later in the midbody. Strongly expressed in the animal hemisphere during blastula stages, with most cells showing expression by gastrulation. By stage 17, expression is highest in cells of the developing neuroectoderm, and at stage 24 the notochord, neural tube, neural crest, somites and some cells of the archenteron show high expression. By stage 35, expression has declined in the notochord, but remains in the neural tube, epidermis and a layer of cells in the archenteron. Also highly expressed in the retina and neuronal cell bodies at the base of the cement gland but not the cement gland itself. At stage 38, expression is widespread, being highest in the nervous system and retina. In the adult, expression is high in the brain, heart, oocyte, stomach, and low in skeletal muscle.

The protein resides in the nucleus matrix. The protein localises to the cytoplasm. Its subcellular location is the cytoskeleton. It is found in the cell cortex. It localises to the membrane. Its function is as follows. May play a role in the regulation of cell morphology and cytoskeletal organization. Binds to F-actin and exhibits pH-sensitive F-actin depolymerizing activity. Required for formation of the cleavage furrow during cytokinesis. In Xenopus laevis (African clawed frog), this protein is Cofilin-1-A (cfl1-a).